We begin with the raw amino-acid sequence, 141 residues long: Nucleoside diphosphate kinase (141 aa).

Lys-11, Phe-59, Arg-87, Thr-93, Arg-104, and Asn-114 together coordinate ATP. His-117 (pros-phosphohistidine intermediate) is an active-site residue.

It belongs to the NDK family. As to quaternary structure, homotetramer. Mg(2+) is required as a cofactor.

The protein resides in the cytoplasm. The catalysed reaction is a 2'-deoxyribonucleoside 5'-diphosphate + ATP = a 2'-deoxyribonucleoside 5'-triphosphate + ADP. It catalyses the reaction a ribonucleoside 5'-diphosphate + ATP = a ribonucleoside 5'-triphosphate + ADP. In terms of biological role, major role in the synthesis of nucleoside triphosphates other than ATP. The ATP gamma phosphate is transferred to the NDP beta phosphate via a ping-pong mechanism, using a phosphorylated active-site intermediate. This Nitrosomonas europaea (strain ATCC 19718 / CIP 103999 / KCTC 2705 / NBRC 14298) protein is Nucleoside diphosphate kinase.